A 232-amino-acid polypeptide reads, in one-letter code: MSATKMNAQEIIKFIADAKKKTPVKVTFDGELHGSIPWSVVKLGNVLFGDWEEIKPLLANLEENKTYVVEQDARNSAVPLLDKRDINARIEPGAIIRDQVEIGDNAVIMMGAVINIGAEIGAGTMIDMGAILGGRAIVGKNSHVGAGAVLAGVIEPASAEPVRVGDNVLIGANAVVIEGVQIGSGSVVAAGAIVTQDVPENVVVAGVPARVIKTIDEKTQQKTALEDALRTL.

Belongs to the transferase hexapeptide repeat family. DapH subfamily.

It carries out the reaction (S)-2,3,4,5-tetrahydrodipicolinate + acetyl-CoA + H2O = L-2-acetamido-6-oxoheptanedioate + CoA. Its pathway is amino-acid biosynthesis; L-lysine biosynthesis via DAP pathway; LL-2,6-diaminopimelate from (S)-tetrahydrodipicolinate (acetylase route): step 1/3. Its function is as follows. Catalyzes the transfer of an acetyl group from acetyl-CoA to tetrahydrodipicolinate. This is 2,3,4,5-tetrahydropyridine-2,6-dicarboxylate N-acetyltransferase from Streptococcus sanguinis (strain SK36).